The sequence spans 34 residues: Potassium channel toxin alpha-KTx 6.17 (34 aa).

Intrachain disulfides connect Cys-3-Cys-24, Cys-9-Cys-29, Cys-13-Cys-31, and Cys-19-Cys-34.

Belongs to the short scorpion toxin superfamily. Potassium channel inhibitor family. Alpha-KTx 06 subfamily. Expressed by the venom gland.

It localises to the secreted. Functionally, this toxin reversibly blocks Shaker B potassium-channels (expressed in insect Sf9 cells) with a Kd of 96.6 nM, and presents an even better affinity toward hKv1.3 (KCNA3), blocking it with a Kd of 17.7 nM. The polypeptide is Potassium channel toxin alpha-KTx 6.17 (Opisthacanthus cayaporum (South American scorpion)).